Here is a 574-residue protein sequence, read N- to C-terminus: Proline--tRNA ligase (574 aa).

Belongs to the class-II aminoacyl-tRNA synthetase family. ProS type 1 subfamily. In terms of assembly, homodimer.

It localises to the cytoplasm. The enzyme catalyses tRNA(Pro) + L-proline + ATP = L-prolyl-tRNA(Pro) + AMP + diphosphate. Its function is as follows. Catalyzes the attachment of proline to tRNA(Pro) in a two-step reaction: proline is first activated by ATP to form Pro-AMP and then transferred to the acceptor end of tRNA(Pro). As ProRS can inadvertently accommodate and process non-cognate amino acids such as alanine and cysteine, to avoid such errors it has two additional distinct editing activities against alanine. One activity is designated as 'pretransfer' editing and involves the tRNA(Pro)-independent hydrolysis of activated Ala-AMP. The other activity is designated 'posttransfer' editing and involves deacylation of mischarged Ala-tRNA(Pro). The misacylated Cys-tRNA(Pro) is not edited by ProRS. The polypeptide is Proline--tRNA ligase (Teredinibacter turnerae (strain ATCC 39867 / T7901)).